Here is a 66-residue protein sequence, read N- to C-terminus: Large ribosomal subunit protein bL31 (66 aa).

Zn(2+) is bound by residues Cys-16, Cys-18, Cys-36, and Cys-39.

It belongs to the bacterial ribosomal protein bL31 family. Type A subfamily. In terms of assembly, part of the 50S ribosomal subunit. Zn(2+) serves as cofactor.

In terms of biological role, binds the 23S rRNA. The sequence is that of Large ribosomal subunit protein bL31 from Trichlorobacter lovleyi (strain ATCC BAA-1151 / DSM 17278 / SZ) (Geobacter lovleyi).